The following is a 74-amino-acid chain: MDKRIEEVAAKALEKMGNDRYRLSLVVAKRAEQLANGATPLVDFDKNKNKLADIALYEIAENKITLEGLVETNR.

This sequence belongs to the RNA polymerase subunit omega family. In terms of assembly, the RNAP catalytic core consists of 2 alpha, 1 beta, 1 beta' and 1 omega subunit. When a sigma factor is associated with the core the holoenzyme is formed, which can initiate transcription.

It catalyses the reaction RNA(n) + a ribonucleoside 5'-triphosphate = RNA(n+1) + diphosphate. Promotes RNA polymerase assembly. Latches the N- and C-terminal regions of the beta' subunit thereby facilitating its interaction with the beta and alpha subunits. This is DNA-directed RNA polymerase subunit omega from Campylobacter jejuni subsp. jejuni serotype O:6 (strain 81116 / NCTC 11828).